A 378-amino-acid polypeptide reads, in one-letter code: Ferrochelatase (378 aa).

Residues His-214 and Glu-295 each coordinate Fe cation.

This sequence belongs to the ferrochelatase family.

It localises to the cytoplasm. The catalysed reaction is heme b + 2 H(+) = protoporphyrin IX + Fe(2+). It participates in porphyrin-containing compound metabolism; protoheme biosynthesis; protoheme from protoporphyrin-IX: step 1/1. Its function is as follows. Catalyzes the ferrous insertion into protoporphyrin IX. This chain is Ferrochelatase, found in Hydrogenovibrio crunogenus (strain DSM 25203 / XCL-2) (Thiomicrospira crunogena).